The chain runs to 441 residues: Mitochondrial inner membrane protein OXA1L (441 aa).

Residues 1–113 (MALALMCGRR…QAAAEQSFAE (113 aa)) are Mitochondrial intermembrane-facing. A helical transmembrane segment spans residues 114–134 (LGLGSYTPVGLIQNLLEFMHV). The Mitochondrial matrix portion of the chain corresponds to 135–139 (NLGLP). The chain crosses the membrane as a helical span at residues 140-160 (WWGAIAACTVLARCLVFPLIV). The Mitochondrial intermembrane segment spans residues 161–212 (KGQREAAKIHNHLPEIQKFSARIREAKLTGNHTEFYRASSEMTFYQKKHDIK). A helical transmembrane segment spans residues 213–233 (LFRPLILPLTQAPIFISFFIA). Over 234–260 (LREMANLPVPSLQTGGLWWFQDLTLSD) the chain is Mitochondrial matrix. The chain crosses the membrane as a helical span at residues 261–281 (PIYVLPLVVTATMWGVLELGA). Residues 282-298 (ETGMQSSDLQWMRNFIR) lie on the Mitochondrial intermembrane side of the membrane. A helical transmembrane segment spans residues 299–319 (LMPLAVLPITIHFPTAVFMYW). The Mitochondrial matrix portion of the chain corresponds to 320-441 (LSSNMFSLGQ…SKQPWRDTLG (122 aa)). Position 364 is a phosphoserine (Ser-364). Thr-400 carries the post-translational modification Phosphothreonine. Residues 405–441 (PLLQHGKNDPPNTPNSSSSSSSSNKAKSKQPWRDTLG) form a disordered region. Residues 418–429 (PNSSSSSSSSNK) show a composition bias toward low complexity.

Belongs to the OXA1/ALB3/YidC family. In terms of assembly, monomer; predominantly monomeric at low salt concentrations. Homooligomer; predominantly homooligomeric at high salt concentrations. Associates with the mitochondrial ribosome. Associates preferentially as a dimer with the large ribosomal subunit 39S of the mitochondrial ribosome. Interacts with OXA1L; promoting cotranslational quality control in mitochondria.

It is found in the mitochondrion inner membrane. Mitochondrial membrane insertase that mediates the cotranslational insertion of integral membrane proteins into the mitochondrial inner membrane. Essential for the activity and assembly of cytochrome oxidase. Required for the correct biogenesis of ATP synthase and complex I in mitochondria. This Bos taurus (Bovine) protein is Mitochondrial inner membrane protein OXA1L (OXA1L).